Here is a 489-residue protein sequence, read N- to C-terminus: Ubiquitin carboxyl-terminal hydrolase 14 (489 aa).

The USP domain occupies 102–458 (CGLANLGNTC…SAYVLLYEAR (357 aa)). C111 acts as the Nucleophile in catalysis. The active-site Proton acceptor is the H409. Residues 467 to 489 (PPAPVPTEVAADTAEPMEVSEKQ) are disordered.

The protein belongs to the peptidase C19 family. USP14/UBP6 subfamily.

The enzyme catalyses Thiol-dependent hydrolysis of ester, thioester, amide, peptide and isopeptide bonds formed by the C-terminal Gly of ubiquitin (a 76-residue protein attached to proteins as an intracellular targeting signal).. Its function is as follows. Proteasome-associated deubiquitinase which releases ubiquitin from the proteasome targeted ubiquitinated proteins. Ensures the regeneration of ubiquitin at the proteasome. The sequence is that of Ubiquitin carboxyl-terminal hydrolase 14 (usp-14) from Caenorhabditis elegans.